A 688-amino-acid chain; its full sequence is Glycine--tRNA ligase beta subunit (688 aa).

It belongs to the class-II aminoacyl-tRNA synthetase family. As to quaternary structure, tetramer of two alpha and two beta subunits.

Its subcellular location is the cytoplasm. The enzyme catalyses tRNA(Gly) + glycine + ATP = glycyl-tRNA(Gly) + AMP + diphosphate. The polypeptide is Glycine--tRNA ligase beta subunit (Lactobacillus delbrueckii subsp. bulgaricus (strain ATCC BAA-365 / Lb-18)).